Consider the following 559-residue polypeptide: Formate--tetrahydrofolate ligase (559 aa).

68 to 75 is an ATP binding site; the sequence is TPAGEGKT.

It belongs to the formate--tetrahydrofolate ligase family.

The enzyme catalyses (6S)-5,6,7,8-tetrahydrofolate + formate + ATP = (6R)-10-formyltetrahydrofolate + ADP + phosphate. Its pathway is one-carbon metabolism; tetrahydrofolate interconversion. The sequence is that of Formate--tetrahydrofolate ligase from Rhizobium meliloti (strain 1021) (Ensifer meliloti).